Consider the following 86-residue polypeptide: Putative membrane protein insertion efficiency factor (86 aa).

It belongs to the UPF0161 family.

The protein localises to the cell inner membrane. Could be involved in insertion of integral membrane proteins into the membrane. This Haemophilus influenzae (strain 86-028NP) protein is Putative membrane protein insertion efficiency factor.